The chain runs to 147 residues: 3-dehydroquinate dehydratase (147 aa).

Catalysis depends on Y23, which acts as the Proton acceptor. Positions 75, 81, and 88 each coordinate substrate. H101 functions as the Proton donor in the catalytic mechanism. Residues 102-103 (LS) and R112 contribute to the substrate site.

Belongs to the type-II 3-dehydroquinase family. As to quaternary structure, homododecamer.

It carries out the reaction 3-dehydroquinate = 3-dehydroshikimate + H2O. It participates in metabolic intermediate biosynthesis; chorismate biosynthesis; chorismate from D-erythrose 4-phosphate and phosphoenolpyruvate: step 3/7. Its function is as follows. Catalyzes a trans-dehydration via an enolate intermediate. This chain is 3-dehydroquinate dehydratase, found in Hahella chejuensis (strain KCTC 2396).